A 441-amino-acid polypeptide reads, in one-letter code: Dolichyl-diphosphooligosaccharide--protein glycosyltransferase 48 kDa subunit (441 aa).

The N-terminal stretch at 1 to 28 (MATALSGGFSKNALFILSAALMLQAVLG) is a signal peptide. Over 29–410 (DGKTLVLLDN…TQYERFIPSA (382 aa)) the chain is Lumenal. Residues 411–431 (FPYYASAFSMMAGLFVFSVVF) traverse the membrane as a helical segment. Over 432–441 (LHMREKEKSD) the chain is Cytoplasmic.

The protein belongs to the DDOST 48 kDa subunit family. Component of the oligosaccharyltransferase (OST) complex.

Its subcellular location is the endoplasmic reticulum membrane. It functions in the pathway protein modification; protein glycosylation. In terms of biological role, subunit of the oligosaccharyl transferase (OST) complex that catalyzes the initial transfer of a defined glycan (Glc(3)Man(9)GlcNAc(2) in eukaryotes) from the lipid carrier dolichol-pyrophosphate to an asparagine residue within an Asn-X-Ser/Thr consensus motif in nascent polypeptide chains, the first step in protein N-glycosylation. N-glycosylation occurs cotranslationally and the complex associates with the Sec61 complex at the channel-forming translocon complex that mediates protein translocation across the endoplasmic reticulum (ER). All subunits are required for a maximal enzyme activity. Required for the assembly of both SST3A- and SS3B-containing OST complexes. This is Dolichyl-diphosphooligosaccharide--protein glycosyltransferase 48 kDa subunit from Danio rerio (Zebrafish).